Reading from the N-terminus, the 152-residue chain is Deoxyuridine 5'-triphosphate nucleotidohydrolase (152 aa).

Substrate contacts are provided by residues 71–73, Asn84, 88–90, and Met98; these read RSG and LID.

It belongs to the dUTPase family. Mg(2+) serves as cofactor.

The enzyme catalyses dUTP + H2O = dUMP + diphosphate + H(+). It participates in pyrimidine metabolism; dUMP biosynthesis; dUMP from dCTP (dUTP route): step 2/2. Functionally, this enzyme is involved in nucleotide metabolism: it produces dUMP, the immediate precursor of thymidine nucleotides and it decreases the intracellular concentration of dUTP so that uracil cannot be incorporated into DNA. The polypeptide is Deoxyuridine 5'-triphosphate nucleotidohydrolase (Shewanella putrefaciens (strain CN-32 / ATCC BAA-453)).